A 340-amino-acid polypeptide reads, in one-letter code: Leucine-rich repeat-containing protein 23 (340 aa).

The segment covering 1–27 (MSDEDDVDDVDAEQDEVESDKEIEEWE) has biased composition (acidic residues). The segment at 1-38 (MSDEDDVDDVDAEQDEVESDKEIEEWEDYRKETEEASE) is disordered. 6 LRR repeats span residues 89-110 (HLRYVDISENHITDISPLNSLT), 111-134 (HLLWLKADGNQLRSARMNELPYLQ), 177-197 (SLHTLELRGNQLESTKGIYLP), 198-219 (KLKNLYLAQNLLKKVEGLENLS), 220-241 (NLTTLHLRDNQIETLNGFSQEM), and 243-264 (SLQYLNLRSNMISDLAELAKLR). Residues 205–340 (AQNLLKKVEG…QDMEPYLPPV (136 aa)) form an interaction with RSPH9 region. An LRRCT domain is found at 277-315 (NPCADETDYRQEALVQMAHLERLDKEFYEDDDRAEAEEI). Positions 305–328 (EDDDRAEAEEIRQRLKEEQDQDLD) form a coiled coil. The disordered stretch occupies residues 317-340 (QRLKEEQDQDLDPDQDMEPYLPPV). A compositionally biased stretch (acidic residues) spans 323 to 333 (QDQDLDPDQDM).

In terms of assembly, component of the axonemal radial spoke complex. Interacts with RSPH3A and RSPH3B. Interacts with RSPH9. Expressed in the testis (at protein level).

The protein resides in the cytoplasm. The protein localises to the cytoskeleton. Its subcellular location is the flagellum axoneme. Essential for sperm motility and male fertility. Plays an important role in the proper assembly of the third radial spoke (RS3) head and the bridge structure between RS2 and RS3 in the sperm flagella. This Mus musculus (Mouse) protein is Leucine-rich repeat-containing protein 23 (Lrrc23).